The primary structure comprises 608 residues: Kelch-like protein 10 (608 aa).

The 68-residue stretch at 39–106 (CDVVIKVNGF…AYTRTVPITP (68 aa)) folds into the BTB domain. 6 Kelch repeats span residues 292–339 (ILFA…YLKG), 340–386 (YVYI…VLSN), 388–433 (IYAM…TLYG), 434–480 (KVYI…AYGE), 481–527 (HVYA…VVDD), and 529–574 (LFVV…VVPG). Position 501 is a phosphoserine (Ser-501).

Self-associates. Interacts with CUL3; indicative for the participation in an E3 ubiquitin ligase complex. Testis specific.

The protein localises to the cytoplasm. It functions in the pathway protein modification; protein ubiquitination. May be a substrate-specific adapter of a CUL3-based E3 ubiquitin-protein ligase complex which mediates the ubiquitination and subsequent proteasomal degradation of target proteins during spermatogenesis. Required for male fertility. The chain is Kelch-like protein 10 (Klhl10) from Mus musculus (Mouse).